Here is a 37-residue protein sequence, read N- to C-terminus: Peptide encoded by miPEP164a (37 aa).

Regulatory peptide encoded by the primary transcript (pri-miR164a) of the microRNA miR164a that enhances the accumulation of its corresponding mature miRNA. Acts probably as a transcriptional activator of its corresponding pri-miRNA. This is Peptide encoded by miPEP164a from Arabidopsis thaliana (Mouse-ear cress).